Reading from the N-terminus, the 234-residue chain is Large ribosomal subunit protein uL1 (234 aa).

This sequence belongs to the universal ribosomal protein uL1 family. Part of the 50S ribosomal subunit.

Its function is as follows. Binds directly to 23S rRNA. The L1 stalk is quite mobile in the ribosome, and is involved in E site tRNA release. In terms of biological role, protein L1 is also a translational repressor protein, it controls the translation of the L11 operon by binding to its mRNA. The chain is Large ribosomal subunit protein uL1 from Sulfurovum sp. (strain NBC37-1).